Here is a 261-residue protein sequence, read N- to C-terminus: Imidazole glycerol phosphate synthase subunit HisF (261 aa).

Catalysis depends on residues Asp-16 and Asp-135.

The protein belongs to the HisA/HisF family. As to quaternary structure, heterodimer of HisH and HisF.

Its subcellular location is the cytoplasm. It carries out the reaction 5-[(5-phospho-1-deoxy-D-ribulos-1-ylimino)methylamino]-1-(5-phospho-beta-D-ribosyl)imidazole-4-carboxamide + L-glutamine = D-erythro-1-(imidazol-4-yl)glycerol 3-phosphate + 5-amino-1-(5-phospho-beta-D-ribosyl)imidazole-4-carboxamide + L-glutamate + H(+). It participates in amino-acid biosynthesis; L-histidine biosynthesis; L-histidine from 5-phospho-alpha-D-ribose 1-diphosphate: step 5/9. Functionally, IGPS catalyzes the conversion of PRFAR and glutamine to IGP, AICAR and glutamate. The HisF subunit catalyzes the cyclization activity that produces IGP and AICAR from PRFAR using the ammonia provided by the HisH subunit. The sequence is that of Imidazole glycerol phosphate synthase subunit HisF from Mycobacterium marinum (strain ATCC BAA-535 / M).